The chain runs to 460 residues: Jacalin-related lectin 36 (460 aa).

Residues 1-131 enclose the Jacalin-type lectin 1 domain; sequence MAAATMSWDD…LNSIDVHFAP (131 aa). The residue at position 2 (Ala2) is an N-acetylalanine. Disordered regions lie at residues 34 to 57, 133 to 162, and 291 to 334; these read YDGD…VSLS, PSSS…WDDG, and SGRG…PHEG. Low complexity predominate over residues 133–143; sequence PSSSSSSSSLS. Residues 145–289 enclose the Jacalin-type lectin 2 domain; the sequence is ANKVDAQGGK…LNALGAYFAP (145 aa). Over residues 292-309 the composition is skewed to polar residues; sequence GRGTPSATQPPGSAQPTG. The Jacalin-type lectin 3 domain maps to 313–457; it reads AKKLEAKGGN…IHQVGVHVKP (145 aa).

It belongs to the jacalin lectin family.

This is Jacalin-related lectin 36 (JAL36) from Arabidopsis thaliana (Mouse-ear cress).